The following is a 246-amino-acid chain: 2-C-methyl-D-erythritol 4-phosphate cytidylyltransferase (246 aa).

The protein belongs to the IspD/TarI cytidylyltransferase family. IspD subfamily.

The catalysed reaction is 2-C-methyl-D-erythritol 4-phosphate + CTP + H(+) = 4-CDP-2-C-methyl-D-erythritol + diphosphate. It participates in isoprenoid biosynthesis; isopentenyl diphosphate biosynthesis via DXP pathway; isopentenyl diphosphate from 1-deoxy-D-xylulose 5-phosphate: step 2/6. In terms of biological role, catalyzes the formation of 4-diphosphocytidyl-2-C-methyl-D-erythritol from CTP and 2-C-methyl-D-erythritol 4-phosphate (MEP). The polypeptide is 2-C-methyl-D-erythritol 4-phosphate cytidylyltransferase (Chlorobaculum tepidum (strain ATCC 49652 / DSM 12025 / NBRC 103806 / TLS) (Chlorobium tepidum)).